Reading from the N-terminus, the 264-residue chain is uncharacterized protein (264 aa).

A disordered region spans residues 57 to 264; sequence RPPASPCPPR…VYPHPHLTAT (208 aa). Basic residues predominate over residues 140-153; the sequence is GKARRSPGRRRHPH. Residues 154-165 show a composition bias toward low complexity; that stretch reads SSFPQASSPSSP.

This is an uncharacterized protein from Homo sapiens (Human).